The sequence spans 354 residues: tRNA N6-adenosine threonylcarbamoyltransferase (354 aa).

The Fe cation site is built by histidine 115 and histidine 119. Substrate is bound by residues leucine 138–glycine 142, aspartate 171, glycine 184, and asparagine 276. Position 304 (aspartate 304) interacts with Fe cation.

This sequence belongs to the KAE1 / TsaD family. It depends on Fe(2+) as a cofactor.

It localises to the cytoplasm. The enzyme catalyses L-threonylcarbamoyladenylate + adenosine(37) in tRNA = N(6)-L-threonylcarbamoyladenosine(37) in tRNA + AMP + H(+). In terms of biological role, required for the formation of a threonylcarbamoyl group on adenosine at position 37 (t(6)A37) in tRNAs that read codons beginning with adenine. Is involved in the transfer of the threonylcarbamoyl moiety of threonylcarbamoyl-AMP (TC-AMP) to the N6 group of A37, together with TsaE and TsaB. TsaD likely plays a direct catalytic role in this reaction. In Xanthomonas oryzae pv. oryzae (strain MAFF 311018), this protein is tRNA N6-adenosine threonylcarbamoyltransferase.